A 217-amino-acid polypeptide reads, in one-letter code: Probable GTP-binding protein EngB (217 aa).

In terms of domain architecture, EngB-type G spans 29–213; it reads GPLEVAFAGR…RQAIGETVGV (185 aa). Residues 37-44, 64-68, 91-94, 158-161, and 192-194 each bind GTP; these read GRSNVGKS, GRTQE, DMPG, TKTD, and TSS. Mg(2+)-binding residues include Ser-44 and Thr-66.

This sequence belongs to the TRAFAC class TrmE-Era-EngA-EngB-Septin-like GTPase superfamily. EngB GTPase family. Mg(2+) serves as cofactor.

Functionally, necessary for normal cell division and for the maintenance of normal septation. This is Probable GTP-binding protein EngB from Rhizobium leguminosarum bv. trifolii (strain WSM2304).